A 147-amino-acid chain; its full sequence is Large ribosomal subunit protein uL13 (147 aa).

Belongs to the universal ribosomal protein uL13 family. Part of the 50S ribosomal subunit.

Its function is as follows. This protein is one of the early assembly proteins of the 50S ribosomal subunit, although it is not seen to bind rRNA by itself. It is important during the early stages of 50S assembly. This Mycolicibacterium smegmatis (strain ATCC 700084 / mc(2)155) (Mycobacterium smegmatis) protein is Large ribosomal subunit protein uL13.